The following is a 98-amino-acid chain: NADH-ubiquinone oxidoreductase chain 4L (98 aa).

Helical transmembrane passes span 2 to 22 (PSIS…MLIF), 29 to 49 (SLLC…LTIL), and 61 to 81 (ILLL…LVTV).

Belongs to the complex I subunit 4L family. In terms of assembly, core subunit of respiratory chain NADH dehydrogenase (Complex I) which is composed of 45 different subunits.

Its subcellular location is the mitochondrion inner membrane. The catalysed reaction is a ubiquinone + NADH + 5 H(+)(in) = a ubiquinol + NAD(+) + 4 H(+)(out). In terms of biological role, core subunit of the mitochondrial membrane respiratory chain NADH dehydrogenase (Complex I) which catalyzes electron transfer from NADH through the respiratory chain, using ubiquinone as an electron acceptor. Part of the enzyme membrane arm which is embedded in the lipid bilayer and involved in proton translocation. The polypeptide is NADH-ubiquinone oxidoreductase chain 4L (MT-ND4L) (Eulemur rubriventer (Red-bellied lemur)).